The primary structure comprises 128 residues: Large ribosomal subunit protein uL22 (128 aa).

It belongs to the universal ribosomal protein uL22 family. In terms of assembly, part of the 50S ribosomal subunit.

In terms of biological role, this protein binds specifically to 23S rRNA; its binding is stimulated by other ribosomal proteins, e.g. L4, L17, and L20. It is important during the early stages of 50S assembly. It makes multiple contacts with different domains of the 23S rRNA in the assembled 50S subunit and ribosome. Its function is as follows. The globular domain of the protein is located near the polypeptide exit tunnel on the outside of the subunit, while an extended beta-hairpin is found that lines the wall of the exit tunnel in the center of the 70S ribosome. This chain is Large ribosomal subunit protein uL22, found in Rhodopseudomonas palustris (strain BisB18).